Here is a 398-residue protein sequence, read N- to C-terminus: MAQRQPHSPNQTLISITNDTESSSVVSNDNTNKGRSGDNSPGIEALCAIYITYAVIISVGILGNAILIKVFFKTKSMQTVPNIFITSLAFGDLLLLLTCVPVDATHYLAEGWLFGRIGCKVLSFIRLTSVGVSVFTLTILSADRYKAVVKPLERQPSNAILKTCIKAGCVWIVSMIFALPEAIFSNVYSFRDPNKNVTFESCTSYPVSKKLLQEIHSLLCFLVFYIIPLSIISVYYSLIARTLYKSTLNIPTEEQGHARKQIESRKRIARTVLVLVALFALCWLPNHLLYLYHSFTSQTYVDPSAMHFIFTIFSRVLAFSNSCVNPFALYWLSKTFQKHFKAQLFCCKAEQPEPPVADTSLTTLAVMGRVPGTGNMQMSEISVTSFPGCSVKQAEDRV.

Residues 1–40 (MAQRQPHSPNQTLISITNDTESSSVVSNDNTNKGRSGDNS) lie on the Extracellular side of the membrane. N-linked (GlcNAc...) asparagine glycosylation is found at Asn-10 and Asn-18. The helical transmembrane segment at 41–62 (PGIEALCAIYITYAVIISVGIL) threads the bilayer. Over 63–81 (GNAILIKVFFKTKSMQTVP) the chain is Cytoplasmic. The helical transmembrane segment at 82-102 (NIFITSLAFGDLLLLLTCVPV) threads the bilayer. Topologically, residues 103-120 (DATHYLAEGWLFGRIGCK) are extracellular. A disulfide bridge connects residues Cys-119 and Cys-202. Residues 121–142 (VLSFIRLTSVGVSVFTLTILSA) form a helical membrane-spanning segment. The Cytoplasmic segment spans residues 143-162 (DRYKAVVKPLERQPSNAILK). A helical transmembrane segment spans residues 163–183 (TCIKAGCVWIVSMIFALPEAI). Residues 184-219 (FSNVYSFRDPNKNVTFESCTSYPVSKKLLQEIHSLL) are Extracellular-facing. The helical transmembrane segment at 220-240 (CFLVFYIIPLSIISVYYSLIA) threads the bilayer. The Cytoplasmic segment spans residues 241-271 (RTLYKSTLNIPTEEQGHARKQIESRKRIART). Residues 272–292 (VLVLVALFALCWLPNHLLYLY) traverse the membrane as a helical segment. Residues 293–312 (HSFTSQTYVDPSAMHFIFTI) are Extracellular-facing. A helical membrane pass occupies residues 313–332 (FSRVLAFSNSCVNPFALYWL). At 333–398 (SKTFQKHFKA…CSVKQAEDRV (66 aa)) the chain is on the cytoplasmic side. A lipid anchor (S-palmitoyl cysteine) is attached at Cys-346.

The protein belongs to the G-protein coupled receptor 1 family. Interacts with C6orf89.

The protein localises to the cell membrane. Functionally, role in sperm cell division, maturation, or function. This receptor mediates its action by association with G proteins that activate a phosphatidylinositol-calcium second messenger system. The polypeptide is Bombesin receptor subtype-3 (BRS3) (Macaca mulatta (Rhesus macaque)).